A 957-amino-acid chain; its full sequence is Valine--tRNA ligase (957 aa).

A 'HIGH' region motif is present at residues 47–57; the sequence is PNITGQLHLGH. The 'KMSKS' region signature appears at 558-562; sequence KMSKS. Residue lysine 561 participates in ATP binding. Residues 889–918 are a coiled coil; the sequence is FNKENEINRLKKESELINRKIETIQKLLDD.

This sequence belongs to the class-I aminoacyl-tRNA synthetase family. ValS type 1 subfamily. Monomer.

Its subcellular location is the cytoplasm. The enzyme catalyses tRNA(Val) + L-valine + ATP = L-valyl-tRNA(Val) + AMP + diphosphate. Functionally, catalyzes the attachment of valine to tRNA(Val). As ValRS can inadvertently accommodate and process structurally similar amino acids such as threonine, to avoid such errors, it has a 'posttransfer' editing activity that hydrolyzes mischarged Thr-tRNA(Val) in a tRNA-dependent manner. The protein is Valine--tRNA ligase of Blochmanniella pennsylvanica (strain BPEN).